The primary structure comprises 148 residues: Probable DNA-directed RNA polymerases I, II, and III subunit RPABC3 (148 aa).

The tract at residues 16–40 (DPDGKKFDRVSRYFCDAESFKMELI) is non-specific ssDNA binding.

This sequence belongs to the eukaryotic RPB8 RNA polymerase subunit family. Component of the RNA polymerase I (Pol I), RNA polymerase II (Pol II) and RNA polymerase III (Pol III) complexes consisting of at least 13, 12 and 17 subunits, respectively. Directly interacts with POLR2A.

It is found in the nucleus. Its function is as follows. DNA-dependent RNA polymerase catalyzes the transcription of DNA into RNA using the four ribonucleoside triphosphates as substrates. Common component of RNA polymerases I, II and III which synthesize ribosomal RNA precursors, mRNA precursors and many functional non-coding RNAs, and small RNAs, such as 5S rRNA and tRNAs, respectively. In Caenorhabditis elegans, this protein is Probable DNA-directed RNA polymerases I, II, and III subunit RPABC3 (rpb-8).